We begin with the raw amino-acid sequence, 86 residues long: Small ribosomal subunit protein uS17 (86 aa).

It belongs to the universal ribosomal protein uS17 family. As to quaternary structure, part of the 30S ribosomal subunit.

In terms of biological role, one of the primary rRNA binding proteins, it binds specifically to the 5'-end of 16S ribosomal RNA. The polypeptide is Small ribosomal subunit protein uS17 (Caldicellulosiruptor bescii (strain ATCC BAA-1888 / DSM 6725 / KCTC 15123 / Z-1320) (Anaerocellum thermophilum)).